Here is a 422-residue protein sequence, read N- to C-terminus: Serine hydroxymethyltransferase (422 aa).

Residues Leu118 and 122-124 (GHL) contribute to the (6S)-5,6,7,8-tetrahydrofolate site. Residue Lys227 is modified to N6-(pyridoxal phosphate)lysine. Glu242 lines the (6S)-5,6,7,8-tetrahydrofolate pocket.

The protein belongs to the SHMT family. In terms of assembly, homodimer. The cofactor is pyridoxal 5'-phosphate.

The protein localises to the cytoplasm. It carries out the reaction (6R)-5,10-methylene-5,6,7,8-tetrahydrofolate + glycine + H2O = (6S)-5,6,7,8-tetrahydrofolate + L-serine. It functions in the pathway one-carbon metabolism; tetrahydrofolate interconversion. The protein operates within amino-acid biosynthesis; glycine biosynthesis; glycine from L-serine: step 1/1. Catalyzes the reversible interconversion of serine and glycine with tetrahydrofolate (THF) serving as the one-carbon carrier. This reaction serves as the major source of one-carbon groups required for the biosynthesis of purines, thymidylate, methionine, and other important biomolecules. Also exhibits THF-independent aldolase activity toward beta-hydroxyamino acids, producing glycine and aldehydes, via a retro-aldol mechanism. This Sulfurihydrogenibium sp. (strain YO3AOP1) protein is Serine hydroxymethyltransferase.